The sequence spans 230 residues: FDNSEVPILTTKKLAWKTAIKELLWIWQLKSNDVNDLNKMSVHIWDQWKQEDGTIGHAYGFQLGKKNRSLNGEKVDQVDYLLHQLKNNPSSRRHITMLWNPDELDAMALTPCVYETQWYVKHGKLHLEVRARSNDMALGNPFNVFQYNVLQRMIAQVTGYELGEYIFNIGDCHVYTRHIDNLKIQMEREQFEAPELWINPEVKDFYDFTIDDFKLINYKHGDKLLFEVPV.

92 to 93 serves as a coordination point for dUMP; the sequence is RR. The active-site Nucleophile is cysteine 112. DUMP contacts are provided by residues 132 to 135, asparagine 143, and 173 to 175; these read RSND and HVY. Aspartate 135 is a binding site for (6R)-5,10-methylene-5,6,7,8-tetrahydrofolate.

This sequence belongs to the thymidylate synthase family. Bacterial-type ThyA subfamily. As to quaternary structure, homodimer.

The protein localises to the cytoplasm. It carries out the reaction dUMP + (6R)-5,10-methylene-5,6,7,8-tetrahydrofolate = 7,8-dihydrofolate + dTMP. Its pathway is pyrimidine metabolism; dTTP biosynthesis. Catalyzes the reductive methylation of 2'-deoxyuridine-5'-monophosphate (dUMP) to 2'-deoxythymidine-5'-monophosphate (dTMP) while utilizing 5,10-methylenetetrahydrofolate (mTHF) as the methyl donor and reductant in the reaction, yielding dihydrofolate (DHF) as a by-product. This enzymatic reaction provides an intracellular de novo source of dTMP, an essential precursor for DNA biosynthesis. The sequence is that of Thymidylate synthase 1 from Bacillus amyloliquefaciens (Bacillus velezensis).